A 243-amino-acid polypeptide reads, in one-letter code: Ribosomal RNA small subunit methyltransferase J (243 aa).

Residues 112–113 and aspartate 164 each bind S-adenosyl-L-methionine; that span reads ER.

It belongs to the methyltransferase superfamily. RsmJ family.

The protein localises to the cytoplasm. The catalysed reaction is guanosine(1516) in 16S rRNA + S-adenosyl-L-methionine = N(2)-methylguanosine(1516) in 16S rRNA + S-adenosyl-L-homocysteine + H(+). Functionally, specifically methylates the guanosine in position 1516 of 16S rRNA. This chain is Ribosomal RNA small subunit methyltransferase J, found in Legionella pneumophila (strain Lens).